The chain runs to 263 residues: Small ribosomal subunit protein uS3 (263 aa).

The KH type-2 domain occupies 39–107 (VREYLKKKLK…PVHVNIEEIR (69 aa)). The segment at 211-263 (GELPPEAATPREEERRPRRAPRGDRPDGGRPGRPGGRGRGPRKADAAPAPEGE) is disordered. The segment covering 219–240 (TPREEERRPRRAPRGDRPDGGR) has biased composition (basic and acidic residues).

Belongs to the universal ribosomal protein uS3 family. As to quaternary structure, part of the 30S ribosomal subunit. Forms a tight complex with proteins S10 and S14.

In terms of biological role, binds the lower part of the 30S subunit head. Binds mRNA in the 70S ribosome, positioning it for translation. The protein is Small ribosomal subunit protein uS3 of Bordetella petrii (strain ATCC BAA-461 / DSM 12804 / CCUG 43448).